Here is a 378-residue protein sequence, read N- to C-terminus: tRNA (guanine(26)-N(2))-dimethyltransferase (378 aa).

The Trm1 methyltransferase domain occupies 4–374; it reads KEVTEGKVRI…KGYEEIIRCV (371 aa). Arg-44, Arg-69, Asp-87, Asp-114, and Ala-115 together coordinate S-adenosyl-L-methionine. 4 residues coordinate Zn(2+): Cys-246, Cys-249, Cys-263, and Cys-266.

Belongs to the class I-like SAM-binding methyltransferase superfamily. Trm1 family.

It catalyses the reaction guanosine(26) in tRNA + 2 S-adenosyl-L-methionine = N(2)-dimethylguanosine(26) in tRNA + 2 S-adenosyl-L-homocysteine + 2 H(+). In terms of biological role, dimethylates a single guanine residue at position 26 of a number of tRNAs using S-adenosyl-L-methionine as donor of the methyl groups. The sequence is that of tRNA (guanine(26)-N(2))-dimethyltransferase from Saccharolobus islandicus (strain Y.G.57.14 / Yellowstone #1) (Sulfolobus islandicus).